The primary structure comprises 808 residues: Digalactosyldiacylglycerol synthase 1, chloroplastic (808 aa).

Positions 1 to 23 (MVKETLIPPSSTSMTTGTSSSSS) are disordered. Residues 1–58 (MVKETLIPPSSTSMTTGTSSSSSLSMTLSSTNALSFLSKGWREVWDSADADLQLMRDR) constitute a chloroplast transit peptide. A compositionally biased stretch (low complexity) spans 10–23 (SSTSMTTGTSSSSS).

It belongs to the glycosyltransferase group 1 family. Glycosyltransferase 4 subfamily.

Its subcellular location is the plastid. It localises to the chloroplast outer membrane. The catalysed reaction is a 1,2-diacyl-3-O-(beta-D-galactosyl)-sn-glycerol + UDP-alpha-D-galactose = a 1,2-diacyl-3-O-[alpha-D-galactosyl-(1-&gt;6)-beta-D-galactosyl]-sn-glycerol + UDP + H(+). Functionally, involved in the synthesis of diacylglycerol galactolipids that are specifically found in thylakoid membranes. Specific for alpha-glycosidic linkages. Responsible for the final assembly of galactolipids in photosynthetic membranes. Digalactosyldiacylglycerol (DGDG) provides stability to the photosystem I (PSI) complex, especially to the PsaA, PsaB, PsaC, PsaL and PsaH subunits. This chain is Digalactosyldiacylglycerol synthase 1, chloroplastic, found in Arabidopsis thaliana (Mouse-ear cress).